A 631-amino-acid polypeptide reads, in one-letter code: MRAGRVRPLRASDMKKDVRILLVGEPRVGKTSLIMSLVSEEFPEEVPPRAEEITIPADVTPERVPTHIVDYSEAEQSDEQLHQEISQANVICIVYAVNNKHSIDKVTSRWIPLINERTDKDSRLPLILVGNKSDLVEYSSMETILPIMNQYTEIETCVECSAKNLKNISELFYYAQKAVLHPTGPLYCPEEKEMKPACIKALTRIFKISDQDNDGTLNDAELNFFQRICFNTPLAPQALEDVKNVVRKHLSDGVADSGLTLRGFLFLHTLFIQRGRHETTWTVLRRFGYDDDLDLTPEYLFPLLKIPPDCTTELNHHAYLFLQSTFDKHDLDRDCALSPDELKDLFQVFPYIPWGPDVNNTVCTNESGWITYQGFLSQWTLTTYLDVQRCLEYLGYLGYSILTEQESQASAITVTRDKKIDLQKKQTQRNVFRCNVIGVKGCGKTGVLQSLLGRNLMRQKKIRDDHKSYYAINTVYVYGQEKYLLLHDISESEFLTEAEIVCDVVCLVYDVTNPKSFEYCARIFKQHFMDSRIPCLIVAAKSDLHEVKQEHSVSPTDFCRKHKMPPPQAFTCNTADAPSKDIFVKLTTMAMYPHVTQADLKSSTFWLRASFGATVFAVVGFAMYRALLKQR.

Over 1 to 605 the chain is Cytoplasmic; it reads MRAGRVRPLR…TQADLKSSTF (605 aa). A Miro 1 domain is found at 15–181; it reads KKDVRILLVG…FYYAQKAVLH (167 aa). GTP-binding residues include Arg-27, Gly-29, Lys-30, Thr-31, and Ser-32. Thr-31 is a binding site for Mg(2+). Residue Asp-70 participates in Mg(2+) binding. Ser-72 contributes to the GTP binding site. The residue at position 105 (Lys-105) is an N6-acetyllysine. The GTP site is built by Asn-131, Lys-132, Asp-134, Ala-162, and Lys-163. Lys-166 is covalently cross-linked (Glycyl lysine isopeptide (Lys-Gly) (interchain with G-Cter in ubiquitin)). The region spanning 197-232 is the EF-hand 1 domain; sequence ACIKALTRIFKISDQDNDGTLNDAELNFFQRICFNT. Positions 210, 212, 214, 216, and 221 each coordinate Ca(2+). Lys-248 participates in a covalent cross-link: Glycyl lysine isopeptide (Lys-Gly) (interchain with G-Cter in ubiquitin). One can recognise an EF-hand 2 domain in the interval 317–352; that stretch reads HAYLFLQSTFDKHDLDRDCALSPDELKDLFQVFPYI. Positions 330, 332, 334, 336, and 341 each coordinate Ca(2+). Positions 429–592 constitute a Miro 2 domain; the sequence is RNVFRCNVIG…FVKLTTMAMY (164 aa). The GTP site is built by Gly-441, Cys-442, Gly-443, Lys-444, Thr-445, Gly-446, Lys-460, Lys-541, Asp-543, Thr-571, and Cys-572. Mg(2+) is bound at residue Gly-441. A Glycyl lysine isopeptide (Lys-Gly) (interchain with G-Cter in ubiquitin) cross-link involves residue Lys-585. Residues 606-628 form a helical; Anchor for type IV membrane protein membrane-spanning segment; it reads WLRASFGATVFAVVGFAMYRALL. Residues 629 to 631 are Mitochondrial intermembrane-facing; sequence KQR.

Belongs to the mitochondrial Rho GTPase family. As to quaternary structure, homodimer. Interacts with the kinesin-binding proteins TRAK1/OIP106 and TRAK2/GRIF1, forming a link between mitochondria and the trafficking apparatus of the microtubules. Interacts with RAP1GDS1. Interacts with ARMCX1. Found in a complex with KIF5B, OGT, RHOT2 and TRAK1. Post-translationally, ubiquitinated by PRKN during mitophagy, leading to its degradation and enhancement of mitophagy. Deubiquitinated by USP30. In terms of processing, acetylation on Lys-105 decreases sensitivity of mitochondrial transport to elevated Ca(2+) levels, increases mitochondrial transport and promotes axon growth. Deacetylated by HDAC6 which blocks mitochondrial transport and mediates axon growth inhibition.

Its subcellular location is the mitochondrion outer membrane. It catalyses the reaction GTP + H2O = GDP + phosphate + H(+). The enzyme catalyses ATP + H2O = ADP + phosphate + H(+). The catalysed reaction is UTP + H2O = UDP + phosphate + H(+). Atypical mitochondrial nucleoside-triphosphatase (NTPase) involved in mitochondrial trafficking. Probably involved in control of anterograde transport of mitochondria and their subcellular distribution. Promotes mitochondrial fission during high calcium conditions. Can hydrolyze GTP, ATP and UTP. The sequence is that of Mitochondrial Rho GTPase from Rattus norvegicus (Rat).